Reading from the N-terminus, the 821-residue chain is DNA ligase (821 aa).

Residues 33 to 37 (DVDYD), 82 to 83 (SL), and glutamate 113 contribute to the NAD(+) site. Lysine 115 serves as the catalytic N6-AMP-lysine intermediate. 4 residues coordinate NAD(+): arginine 136, glutamate 173, lysine 290, and lysine 314. Zn(2+) contacts are provided by cysteine 408, cysteine 411, cysteine 426, and cysteine 432. Residues 741-821 (IVAGPLDGQT…RLLAYLAEHE (81 aa)) form the BRCT domain.

The protein belongs to the NAD-dependent DNA ligase family. LigA subfamily. Requires Mg(2+) as cofactor. Mn(2+) is required as a cofactor.

It catalyses the reaction NAD(+) + (deoxyribonucleotide)n-3'-hydroxyl + 5'-phospho-(deoxyribonucleotide)m = (deoxyribonucleotide)n+m + AMP + beta-nicotinamide D-nucleotide.. Functionally, DNA ligase that catalyzes the formation of phosphodiester linkages between 5'-phosphoryl and 3'-hydroxyl groups in double-stranded DNA using NAD as a coenzyme and as the energy source for the reaction. It is essential for DNA replication and repair of damaged DNA. In Stenotrophomonas maltophilia (strain K279a), this protein is DNA ligase.